The primary structure comprises 238 residues: 15,16-dihydrobiliverdin:ferredoxin oxidoreductase (238 aa).

Belongs to the HY2 family.

It catalyses the reaction 15,16-dihydrobiliverdin + oxidized 2[4Fe-4S]-[ferredoxin] = biliverdin IXalpha + reduced 2[4Fe-4S]-[ferredoxin] + 2 H(+). Its function is as follows. Catalyzes the two-electron reduction of biliverdin IX-alpha at the C15 methine bridge. The sequence is that of 15,16-dihydrobiliverdin:ferredoxin oxidoreductase from Prochlorococcus marinus (strain MIT 9211).